The sequence spans 461 residues: Asparagine--tRNA ligase (461 aa).

It belongs to the class-II aminoacyl-tRNA synthetase family. As to quaternary structure, homodimer.

It localises to the cytoplasm. It catalyses the reaction tRNA(Asn) + L-asparagine + ATP = L-asparaginyl-tRNA(Asn) + AMP + diphosphate + H(+). This chain is Asparagine--tRNA ligase, found in Geotalea uraniireducens (strain Rf4) (Geobacter uraniireducens).